The sequence spans 874 residues: Valine--tRNA ligase (874 aa).

The 'HIGH' region motif lies at 42 to 52 (PNITGRIHIGH). A 'KMSKS' region motif is present at residues 522–526 (KMSKS). Lys-525 serves as a coordination point for ATP. The stretch at 806–874 (DYIDIDTEKQ…KLQALLKEIS (69 aa)) forms a coiled coil.

Belongs to the class-I aminoacyl-tRNA synthetase family. ValS type 1 subfamily. In terms of assembly, monomer.

It is found in the cytoplasm. The enzyme catalyses tRNA(Val) + L-valine + ATP = L-valyl-tRNA(Val) + AMP + diphosphate. Its function is as follows. Catalyzes the attachment of valine to tRNA(Val). As ValRS can inadvertently accommodate and process structurally similar amino acids such as threonine, to avoid such errors, it has a 'posttransfer' editing activity that hydrolyzes mischarged Thr-tRNA(Val) in a tRNA-dependent manner. The protein is Valine--tRNA ligase of Petrotoga mobilis (strain DSM 10674 / SJ95).